Consider the following 397-residue polypeptide: Enoyl-[acyl-carrier-protein] reductase [NADH] (397 aa).

NAD(+)-binding positions include glycine 48 to tyrosine 53, phenylalanine 74 to glutamate 75, aspartate 111 to alanine 112, and valine 139 to alanine 140. Tyrosine 225 serves as a coordination point for substrate. The active-site Proton donor is the tyrosine 235. NAD(+) contacts are provided by residues lysine 244 and valine 273–threonine 275.

Belongs to the TER reductase family. As to quaternary structure, monomer.

The enzyme catalyses a 2,3-saturated acyl-[ACP] + NAD(+) = a (2E)-enoyl-[ACP] + NADH + H(+). The protein operates within lipid metabolism; fatty acid biosynthesis. Functionally, involved in the final reduction of the elongation cycle of fatty acid synthesis (FAS II). Catalyzes the reduction of a carbon-carbon double bond in an enoyl moiety that is covalently linked to an acyl carrier protein (ACP). In Burkholderia mallei (strain SAVP1), this protein is Enoyl-[acyl-carrier-protein] reductase [NADH].